The following is a 92-amino-acid chain: Small ribosomal subunit protein uS19 (92 aa).

Belongs to the universal ribosomal protein uS19 family.

Functionally, protein S19 forms a complex with S13 that binds strongly to the 16S ribosomal RNA. This chain is Small ribosomal subunit protein uS19, found in Desulfatibacillum aliphaticivorans.